The following is a 475-amino-acid chain: Ribulose bisphosphate carboxylase large chain (475 aa).

Positions 1 to 2 (MS) are excised as a propeptide. The residue at position 3 (proline 3) is an N-acetylproline. Lysine 14 carries the N6,N6,N6-trimethyllysine modification. Substrate contacts are provided by asparagine 123 and threonine 173. Lysine 175 (proton acceptor) is an active-site residue. Lysine 177 provides a ligand contact to substrate. The Mg(2+) site is built by lysine 201, aspartate 203, and glutamate 204. Lysine 201 is subject to N6-carboxylysine. Histidine 294 (proton acceptor) is an active-site residue. Substrate contacts are provided by arginine 295, histidine 327, and serine 379.

The protein belongs to the RuBisCO large chain family. Type I subfamily. In terms of assembly, heterohexadecamer of 8 large chains and 8 small chains; disulfide-linked. The disulfide link is formed within the large subunit homodimers. Mg(2+) is required as a cofactor. Post-translationally, the disulfide bond which can form in the large chain dimeric partners within the hexadecamer appears to be associated with oxidative stress and protein turnover.

The protein localises to the plastid. Its subcellular location is the chloroplast. It carries out the reaction 2 (2R)-3-phosphoglycerate + 2 H(+) = D-ribulose 1,5-bisphosphate + CO2 + H2O. It catalyses the reaction D-ribulose 1,5-bisphosphate + O2 = 2-phosphoglycolate + (2R)-3-phosphoglycerate + 2 H(+). Its function is as follows. RuBisCO catalyzes two reactions: the carboxylation of D-ribulose 1,5-bisphosphate, the primary event in carbon dioxide fixation, as well as the oxidative fragmentation of the pentose substrate in the photorespiration process. Both reactions occur simultaneously and in competition at the same active site. This is Ribulose bisphosphate carboxylase large chain from Populus tremuloides (Quaking aspen).